The following is a 436-amino-acid chain: Serine hydroxymethyltransferase (436 aa).

(6S)-5,6,7,8-tetrahydrofolate contacts are provided by residues Leu-120 and 124–126 (GHL). At Lys-229 the chain carries N6-(pyridoxal phosphate)lysine.

Belongs to the SHMT family. In terms of assembly, homodimer. Pyridoxal 5'-phosphate serves as cofactor.

Its subcellular location is the cytoplasm. It catalyses the reaction (6R)-5,10-methylene-5,6,7,8-tetrahydrofolate + glycine + H2O = (6S)-5,6,7,8-tetrahydrofolate + L-serine. The protein operates within one-carbon metabolism; tetrahydrofolate interconversion. Its pathway is amino-acid biosynthesis; glycine biosynthesis; glycine from L-serine: step 1/1. Catalyzes the reversible interconversion of serine and glycine with tetrahydrofolate (THF) serving as the one-carbon carrier. This reaction serves as the major source of one-carbon groups required for the biosynthesis of purines, thymidylate, methionine, and other important biomolecules. Also exhibits THF-independent aldolase activity toward beta-hydroxyamino acids, producing glycine and aldehydes, via a retro-aldol mechanism. This Roseiflexus castenholzii (strain DSM 13941 / HLO8) protein is Serine hydroxymethyltransferase.